A 456-amino-acid chain; its full sequence is Endoglucanase A (456 aa).

The N-terminal stretch at 1 to 30 is a signal peptide; sequence MSRIRRFLATALAAATAGVGAIVTAIASAG. A catalytic region spans residues 31 to 322; it reads PAHAYDSPFY…RAYELAMNAA (292 aa). The active site involves Asp113. 2 disulfide bridges follow: Cys114/Cys159 and Cys267/Cys302. Asp151 acts as the Proton donor in catalysis. The disordered stretch occupies residues 255–280; sequence SRNGNGPLGSEWCDPPGRATGTWSTT. Asp300 functions as the Nucleophile in the catalytic mechanism. A disordered region spans residues 321 to 358; the sequence is AAPPTYSPSPTPSTPSPSPSQSDPGSPSPSPSQPPAGR. The linker ('hinge') (Pro-Ser box) stretch occupies residues 323–355; the sequence is PPTYSPSPTPSTPSPSPSQSDPGSPSPSPSQPP. Positions 325–338 are enriched in pro residues; sequence TYSPSPTPSTPSPS. One can recognise a CBM2 domain in the interval 353–456; that stretch reads QPPAGRACEA…LSSSITCSAS (104 aa). Cys360 and Cys453 form a disulfide bridge.

It belongs to the glycosyl hydrolase 6 (cellulase B) family.

It carries out the reaction Endohydrolysis of (1-&gt;4)-beta-D-glucosidic linkages in cellulose, lichenin and cereal beta-D-glucans.. The sequence is that of Endoglucanase A (celA) from Thermobispora bispora (Microbispora bispora).